Consider the following 348-residue polypeptide: Protein RecA (348 aa).

67 to 74 (GPESSGKT) is a binding site for ATP.

This sequence belongs to the RecA family.

Its subcellular location is the cytoplasm. Can catalyze the hydrolysis of ATP in the presence of single-stranded DNA, the ATP-dependent uptake of single-stranded DNA by duplex DNA, and the ATP-dependent hybridization of homologous single-stranded DNAs. It interacts with LexA causing its activation and leading to its autocatalytic cleavage. The polypeptide is Protein RecA (Amycolatopsis mediterranei (strain U-32)).